Consider the following 236-residue polypeptide: Mitochondrial coenzyme A diphosphatase NUDT8 (236 aa).

The Nudix hydrolase domain occupies 25 to 172; it reads LRARPASAAV…HFRYTLPVFL (148 aa). An N6-succinyllysine modification is found at Lys-70. The Nudix box signature appears at 70 to 91; sequence KCDPADQDVVHTALRETREELG. Glu-85 and Glu-89 together coordinate Mg(2+).

This sequence belongs to the Nudix hydrolase family. In terms of assembly, monomer. Mg(2+) is required as a cofactor. Mn(2+) serves as cofactor.

It is found in the mitochondrion. It catalyses the reaction an acyl-CoA + H2O = an acyl-4'-phosphopantetheine + adenosine 3',5'-bisphosphate + 2 H(+). It carries out the reaction CoA + H2O = (R)-4'-phosphopantetheine + adenosine 3',5'-bisphosphate + 2 H(+). The catalysed reaction is acetyl-CoA + H2O = S-acetyl-4'-phosphopantetheine + adenosine 3',5'-bisphosphate + 2 H(+). The enzyme catalyses butanoyl-CoA + H2O = S-butanoyl-4'-phosphopantetheine + adenosine 3',5'-bisphosphate + 2 H(+). It catalyses the reaction hexanoyl-CoA + H2O = hexanoyl-4'-phosphopantetheine + adenosine 3',5'-bisphosphate + 2 H(+). It carries out the reaction octanoyl-CoA + H2O = S-octanoyl-4'-phosphopantetheine + adenosine 3',5'-bisphosphate + 2 H(+). The catalysed reaction is propanoyl-CoA + H2O = propanoyl-4'-phosphopantetheine + adenosine 3',5'-bisphosphate + 2 H(+). The enzyme catalyses malonyl-CoA + H2O = malonyl-4'-phosphopantetheine + adenosine 3',5'-bisphosphate + 2 H(+). It catalyses the reaction succinyl-CoA + H2O = succinyl-4'-phosphopantetheine + adenosine 3',5'-bisphosphate + 2 H(+). It carries out the reaction a 5'-end CoA-ribonucleoside in mRNA + H2O = a 5'-end phospho-adenosine-phospho-ribonucleoside in mRNA + (R)-4'-phosphopantetheine + 2 H(+). Acyl-CoA diphosphatase that mediates the hydrolysis of a wide range of CoA and CoA esters yielding 3',5'-ADP and the corresponding 4'-phosphopantetheine derivative as products. Hydrolyzes short- and medium-chain acyl-CoAs, exhibiting the highest activity toward free CoA, hexanoyl-CoA, and octanoyl-CoA and the lowest activity against acetyl-CoA. Exhibits decapping activity towards dpCoA-capped RNAs in vitro. The protein is Mitochondrial coenzyme A diphosphatase NUDT8 (NUDT8) of Homo sapiens (Human).